The primary structure comprises 324 residues: D-erythronate dehydrogenase (324 aa).

NAD(+) is bound by residues serine 125, tyrosine 149, and lysine 153. The active-site Proton acceptor is tyrosine 149.

Belongs to the NAD(P)-dependent epimerase/dehydratase family.

It catalyses the reaction D-erythronate + NAD(+) = 2-dehydro-D-erythronate + NADH + H(+). Functionally, catalyzes oxidation of D-erythronate to 2-oxo-tetronate. Can use either NAD(+) or NADP(+) as cosubstrate, with a preference for NAD(+). The chain is D-erythronate dehydrogenase from Cupriavidus necator (strain ATCC 17699 / DSM 428 / KCTC 22496 / NCIMB 10442 / H16 / Stanier 337) (Ralstonia eutropha).